We begin with the raw amino-acid sequence, 512 residues long: Endoglucanase 14 (512 aa).

The first 22 residues, 1-22 (MLAAAIELVVIATSCMVRDAHG), serve as a signal peptide directing secretion. Asn-76 carries an N-linked (GlcNAc...) asparagine glycan. The active-site Nucleophile is Asp-103. 2 N-linked (GlcNAc...) asparagine glycosylation sites follow: Asn-192 and Asn-215. Active-site residues include His-433, Asp-484, and Glu-493.

Belongs to the glycosyl hydrolase 9 (cellulase E) family.

The protein localises to the secreted. It carries out the reaction Endohydrolysis of (1-&gt;4)-beta-D-glucosidic linkages in cellulose, lichenin and cereal beta-D-glucans.. This is Endoglucanase 14 from Oryza sativa subsp. japonica (Rice).